Reading from the N-terminus, the 447-residue chain is M-phase inducer phosphatase 3 (447 aa).

N-acetylserine is present on Ser2. Ser20, Ser38, Ser56, Ser60, and Ser63 each carry phosphoserine. The residue at position 66 (Thr66) is a Phosphothreonine; by CDK1. Residues 81–90 (MSASPLTTSA) show a composition bias toward polar residues. Residues 81–109 (MSASPLTTSADLEDNGSLDSSGPLDRQLT) form a disordered region. Ser128 is subject to Phosphoserine. A Phosphothreonine modification is found at Thr129. Ser192 bears the Phosphoserine; by CDK1 mark. Residues Ser213 and Ser220 each carry the phosphoserine; by PLK3 modification. Residues 294–401 (VIERFYIIDC…FFPEYMELCD (108 aa)) form the Rhodanese domain. Residue Cys350 is part of the active site. Ser445 carries the phosphoserine modification.

This sequence belongs to the MPI phosphatase family. In terms of assembly, interacts with MAPK14 and 14-3-3 proteins. When phosphorylated on Ser-128 and/or Thr-129, interacts with PLK1. Interacts with MARK3/C-TAK1. In terms of processing, phosphorylated by PLK4. Phosphorylated by PLK1, leading to activate the phosphatase activity. Phosphorylated by CHEK1 and MAPKAPK2. This phosphorylation creates a binding site for 14-3-3 protein and inhibits the phosphatase activity. Phosphorylation by PLK3 at Ser-213 promotes nuclear translocation. Ser-220 is a minor phosphorylation site. Phosphorylation by CDK1 occurs at G2 and G2-M transition and leads to increased activity. As to expression, spleen and thymus.

It localises to the nucleus. The enzyme catalyses O-phospho-L-tyrosyl-[protein] + H2O = L-tyrosyl-[protein] + phosphate. Functionally, functions as a dosage-dependent inducer in mitotic control. Tyrosine protein phosphatase required for progression of the cell cycle. When phosphorylated, highly effective in activating G2 cells into prophase. Directly dephosphorylates CDK1 and activates its kinase activity. This Mus musculus (Mouse) protein is M-phase inducer phosphatase 3 (Cdc25c).